Reading from the N-terminus, the 876-residue chain is MATERYNPRDTEPRWQQEWDARKVFETENDDPREKYYVLEMFPYPSGRIHMGHVRNYTMGDVVARYKRARGFNVLHPMGWDAFGMPAENAAMERGVHPAGWTYQNIAAMKAQLKVMGLSLDWSREFATCDPAYYQRQQYLFLDFLEKGLVYRRQSKVNWDPVDNTVLANEQVIDGRGWRSGALVEQRELTQWFFRITDFSQDLLDALDGLEQWPEKVRLMQKNWIGRSEGLALRWALDPATVPGETKELTVYTTRPDTLFGASFLAISADHPLAREAAAKDAAIDAFCEECRRAGTSLAALETAEKKGIDTGIRARHPFDPEWELPVYVANFVLMDYGTGAIFGCPSGDQRDLDFARKYGLSVVPVVMPKDADAATFTIEDEAYGGDGVMINSRFLDGLSTEEAFEAVASKLEQETLDGAPRAERKVNFRLRDWGISRQRYWGCPIPVIHCEDCGVVPVPKADLPVTLPPDVTFDKPGNPLDRHPTWRHVACPQCGKDARRETDTMDTFVDSSWYYARFTAPWEDKPTDPKAANHWLPVDQYIGGIEHAILHLLYSRFFTRAMKATGHVAMDEPFKGLFTQGMVVHETYSRGEGAQREWVTPAEIRIDEIDGRRRAVLIETGEEVAIGSIEKMSKSKKNVVDPDDIIGSYGADTARFFVLSDSPPDRDVIWSEAGVEGAHRFVQRVWRLVGEAAESLRGAKASPAKEGEGLAISQAAHRTLRAVEADYDKLAFNKAVARIYELVNVLAAPLTQVAAGKADQAVTAAVKDATTILIDLIAPMMPHLAEECWREIGGEGLIAERPWPTFDPALVVENEITLPVQINGKKRADLTIARDADQSAIESAVLALDAVKAALNGASPRKIIVVPQRIVNVVV.

A 'HIGH' region motif is present at residues 43–53 (PYPSGRIHMGH). Positions 632–636 (KMSKS) match the 'KMSKS' region motif. Position 635 (K635) interacts with ATP.

The protein belongs to the class-I aminoacyl-tRNA synthetase family.

Its subcellular location is the cytoplasm. It catalyses the reaction tRNA(Leu) + L-leucine + ATP = L-leucyl-tRNA(Leu) + AMP + diphosphate. This Sinorhizobium fredii (strain NBRC 101917 / NGR234) protein is Leucine--tRNA ligase.